The chain runs to 321 residues: D-alanine--D-alanine ligase (321 aa).

Positions 103–303 (KKILTPENIP…YVALCRMIVE (201 aa)) constitute an ATP-grasp domain. Position 129 to 186 (129 to 186 (PLPRPYVLKPVNEGSSVGVAIIDESFNDGQPIRKDQIDPWKNFKTLLAEPFIKGRELT)) interacts with ATP. Mg(2+) is bound by residues Asp-254, Glu-270, and Asn-272.

The protein belongs to the D-alanine--D-alanine ligase family. Mg(2+) serves as cofactor. Requires Mn(2+) as cofactor.

Its subcellular location is the cytoplasm. It carries out the reaction 2 D-alanine + ATP = D-alanyl-D-alanine + ADP + phosphate + H(+). The protein operates within cell wall biogenesis; peptidoglycan biosynthesis. Its function is as follows. Cell wall formation. The polypeptide is D-alanine--D-alanine ligase (Zymomonas mobilis subsp. mobilis (strain ATCC 31821 / ZM4 / CP4)).